Here is a 163-residue protein sequence, read N- to C-terminus: uncharacterized protein (163 aa).

A helical membrane pass occupies residues Thr-7–Ile-23.

Its subcellular location is the membrane. This is an uncharacterized protein from Saccharomyces cerevisiae (strain ATCC 204508 / S288c) (Baker's yeast).